Reading from the N-terminus, the 354-residue chain is Uroporphyrinogen decarboxylase (354 aa).

Substrate is bound by residues 27 to 31 (RQAGR), F46, D77, Y154, T209, and H327.

This sequence belongs to the uroporphyrinogen decarboxylase family. Homodimer.

Its subcellular location is the cytoplasm. The catalysed reaction is uroporphyrinogen III + 4 H(+) = coproporphyrinogen III + 4 CO2. It participates in porphyrin-containing compound metabolism; protoporphyrin-IX biosynthesis; coproporphyrinogen-III from 5-aminolevulinate: step 4/4. In terms of biological role, catalyzes the decarboxylation of four acetate groups of uroporphyrinogen-III to yield coproporphyrinogen-III. The polypeptide is Uroporphyrinogen decarboxylase (Salmonella typhi).